The chain runs to 96 residues: Small ribosomal subunit protein bS6 (96 aa).

It belongs to the bacterial ribosomal protein bS6 family.

In terms of biological role, binds together with bS18 to 16S ribosomal RNA. This Streptococcus thermophilus (strain ATCC BAA-250 / LMG 18311) protein is Small ribosomal subunit protein bS6.